A 548-amino-acid polypeptide reads, in one-letter code: Membrane protein insertase YidC (548 aa).

The helical transmembrane segment at 6–26 (NLLVIALLFVSFMIWQAWEQD) threads the bilayer. Positions 28–54 (NPQPQTQQTTQTTTTAAGSAADQGVPA) are disordered. Low complexity predominate over residues 29–42 (PQPQTQQTTQTTTT). 4 helical membrane-spanning segments follow: residues 350–370 (FLGNWGFSIIVITFIVRGIMY), 424–444 (FPLIIQMPIFLALYYMLMGSI), 458–478 (LSAQDPYYILPILMGVTMFFI), and 499–519 (PVIFTVFFLWFPSGLVLYYIV).

Belongs to the OXA1/ALB3/YidC family. Type 1 subfamily. Interacts with the Sec translocase complex via SecD. Specifically interacts with transmembrane segments of nascent integral membrane proteins during membrane integration.

The protein localises to the cell inner membrane. Required for the insertion and/or proper folding and/or complex formation of integral membrane proteins into the membrane. Involved in integration of membrane proteins that insert both dependently and independently of the Sec translocase complex, as well as at least some lipoproteins. Aids folding of multispanning membrane proteins. In Citrobacter koseri (strain ATCC BAA-895 / CDC 4225-83 / SGSC4696), this protein is Membrane protein insertase YidC.